Here is a 427-residue protein sequence, read N- to C-terminus: MESDKNGPARQENDIAEKESDIRYWTRVVCPSVRSLLHAAGSYTAEDIEAQMRTLREVVLPDLGPRPSRAPGPSYLFQGGCPFQLSINTTSKANAVRYVWEVLGERGHTSDDPLAMQTTRDTVSRLSAKFGLSTKWSDVLLSALELTTKEAQKAVEKMPEWILEHLEKGAVVPRIKNLPFGFVAFDLKESDVSIKLYITLKAREIFTGKSAADVIFDSLRNFTPAFKPEAIDMIQNFLSGLSEKMPLEVIAIDCVDEAHLSEARVKLYCHSTSNSFNTVKKWLTIGGKVKDENTLKGLQILRSMWHLFIQKPEGIPDDELETPVNLENALKHRMYFSFELKPGQDIPQVKTYLPIWRYAPSDEQAIDNFEAAFRQCHHPWGEDGTYGRIFRNALCAPPIHGDLAYIYCEKRGVYQTIYVTPPLLEED.

Substrate is bound by residues arginine 97, lysine 195, arginine 264, lysine 266, tyrosine 268, and tyrosine 352.

Belongs to the tryptophan dimethylallyltransferase family.

Its pathway is secondary metabolite biosynthesis. Its function is as follows. Indole diterpene prenyltransferase; part of the gene cluster that mediates the biosynthesis of paspalitrems, indole-diterpene (IDT) mycotoxins that are potent tremorgens in mammals. The geranylgeranyl diphosphate (GGPP) synthase idtG is proposed to catalyze the first step in IDT biosynthesis via catalysis of a series of iterative condensations of isopentenyl diphosphate (IPP) with dimethylallyl diphosphate (DMAPP), geranyl diphosphate (GPP), and farnesyl diphosphate (FPP), to form GGPP. Condensation of indole-3-glycerol phosphate with GGPP by the prenyltransferase idtC then forms 3-geranylgeranylindole (3-GGI). Epoxidation of the two terminal alkenes of the geranylgeranyl moiety by the FAD-dependent monooxygenase idtM, and cyclization by the terpene cyclase idtB then leads to the production of paspaline. The cytochrome P450 monooxygenase idtP then catalyzes oxidative elimination of the pendant methyl group at C-12 of paspaline and generates the C-10 ketone to yield 13-desoxypaxilline. The cytochrome P450 monooxygenase idtQ may catalyze the C-13 oxidation of 13-desoxypaxilline to afford paxilline. Considering that both paspalicine and paxilline were detected in C.paspali, idtQ also catalyzes the formation of paspalinine from 13-desoxypaxilline via paspalicine as an intermediate. Finally, the alpha-prenyltransferase idtF prenylates paspalinine at the C-20 or the C-21 positions to yield paspalitrems A and C, respectively. The hydroxylation of paspalitrem A at C-32 by a still unknown oxidase affords paspalitrem B. This chain is Indole diterpene prenyltransferase idtF, found in Claviceps paspali (Rye ergot fungus).